We begin with the raw amino-acid sequence, 475 residues long: Ribulose bisphosphate carboxylase large chain (475 aa).

The propeptide occupies 1-2 (MS). Proline 3 is subject to N-acetylproline. Lysine 14 carries the post-translational modification N6,N6,N6-trimethyllysine. Substrate is bound by residues asparagine 123 and threonine 173. Lysine 175 serves as the catalytic Proton acceptor. Substrate is bound at residue lysine 177. The Mg(2+) site is built by lysine 201, aspartate 203, and glutamate 204. Lysine 201 bears the N6-carboxylysine mark. The active-site Proton acceptor is histidine 294. Substrate contacts are provided by arginine 295, histidine 327, and serine 379.

The protein belongs to the RuBisCO large chain family. Type I subfamily. Heterohexadecamer of 8 large chains and 8 small chains; disulfide-linked. The disulfide link is formed within the large subunit homodimers. It depends on Mg(2+) as a cofactor. Post-translationally, the disulfide bond which can form in the large chain dimeric partners within the hexadecamer appears to be associated with oxidative stress and protein turnover.

It is found in the plastid. The protein resides in the chloroplast. It carries out the reaction 2 (2R)-3-phosphoglycerate + 2 H(+) = D-ribulose 1,5-bisphosphate + CO2 + H2O. The catalysed reaction is D-ribulose 1,5-bisphosphate + O2 = 2-phosphoglycolate + (2R)-3-phosphoglycerate + 2 H(+). Its function is as follows. RuBisCO catalyzes two reactions: the carboxylation of D-ribulose 1,5-bisphosphate, the primary event in carbon dioxide fixation, as well as the oxidative fragmentation of the pentose substrate in the photorespiration process. Both reactions occur simultaneously and in competition at the same active site. This chain is Ribulose bisphosphate carboxylase large chain, found in Liquidambar styraciflua (Sweetgum tree).